Consider the following 541-residue polypeptide: Serine/threonine-protein kinase akt-1 (541 aa).

Residues 15-118 (DVVIEGWLHK…WIHAIESISK (104 aa)) enclose the PH domain. A Protein kinase domain is found at 193-450 (FDFLKVLGKG…ALEICRADFF (258 aa)). Residues 199–207 (LGKGTFGKV) and Lys-222 each bind ATP. Residue Asp-316 is the Proton acceptor of the active site. A Phosphothreonine modification is found at Thr-350. Residues 451-528 (RTVDWEATYR…HNVMGSINRI (78 aa)) form the AGC-kinase C-terminal domain. Ser-517 is subject to Phosphoserine.

This sequence belongs to the protein kinase superfamily. AGC Ser/Thr protein kinase family. RAC subfamily. Interacts with pdk-1, sgk-1, akt-2 and daf-16. Part of a complex containing sgk-1, akt-1 and akt-2. Interacts with cmd-1 in the presence of Ca(2+). Interacts with let-92 phosphatase regulatory subunit pptr-1. It depends on Mg(2+) as a cofactor. In terms of tissue distribution, expressed in neurons, muscle cells of the pharynx, rectal gland cells, vulva and spermatheca.

It catalyses the reaction L-seryl-[protein] + ATP = O-phospho-L-seryl-[protein] + ADP + H(+). The enzyme catalyses L-threonyl-[protein] + ATP = O-phospho-L-threonyl-[protein] + ADP + H(+). Phosphorylated and activated by pdk-1. Its function is as follows. Acts downstream of PI3 kinase age-1 and kinase pdk-1 in the daf-2/insulin receptor-like transduction pathway. Phosphorylates Forkhead-related daf-16 and the longevity-promoting skn-1 transcription factors, which inhibits their entry into the nucleus and antagonizes their functions. Plays a role in maintaining the gonadal basement membrane through it's role in inhibiting daf-16 activity. Has an essential role in regulating developmental arrest at the dauer stage. Plays a role in immune function and pathogen resistance. Regulates salt chemotaxis learning. Downstream of age-1 and together with akt-2 and sgk-1, promotes cell survival during embryonic development. The polypeptide is Serine/threonine-protein kinase akt-1 (Caenorhabditis elegans).